The chain runs to 533 residues: Beta-xylosidase (533 aa).

D14 (proton acceptor) is an active-site residue. E186 (proton donor) is an active-site residue.

The protein belongs to the glycosyl hydrolase 43 family. Homodimer.

The protein resides in the cell membrane. The catalysed reaction is Hydrolysis of (1-&gt;4)-beta-D-xylans, to remove successive D-xylose residues from the non-reducing termini.. The polypeptide is Beta-xylosidase (xynB) (Bacillus subtilis (strain 168)).